The following is a 147-amino-acid chain: UPF0306 protein KPK_0562 (147 aa).

This sequence belongs to the UPF0306 family.

In Klebsiella pneumoniae (strain 342), this protein is UPF0306 protein KPK_0562.